The sequence spans 318 residues: Taste receptor type 2 member 7 (318 aa).

Residues M1–L9 are Extracellular-facing. The chain crosses the membrane as a helical span at residues L10–V30. Over N31–R55 the chain is Cytoplasmic. A helical membrane pass occupies residues I56–Y76. Topologically, residues A77–H94 are extracellular. Residues L95–F115 form a helical membrane-spanning segment. Over H116–R128 the chain is Cytoplasmic. Residues V129–T149 traverse the membrane as a helical segment. The Extracellular segment spans residues E150 to N187. Residues N167 and N175 are each glycosylated (N-linked (GlcNAc...) asparagine). A helical transmembrane segment spans residues L188–L208. The Cytoplasmic portion of the chain corresponds to R209–K235. Residues A236–S256 traverse the membrane as a helical segment. The Extracellular portion of the chain corresponds to S257–A266. Residues V267–L287 form a helical membrane-spanning segment. Topologically, residues G288–I318 are cytoplasmic.

It belongs to the G-protein coupled receptor T2R family.

The protein localises to the membrane. In terms of biological role, gustducin-coupled receptor implicated in the perception of bitter compounds in the oral cavity and the gastrointestinal tract. Signals through PLCB2 and the calcium-regulated cation channel TRPM5. This chain is Taste receptor type 2 member 7 (TAS2R7), found in Gorilla gorilla gorilla (Western lowland gorilla).